Consider the following 348-residue polypeptide: UDP-3-O-acylglucosamine N-acyltransferase (348 aa).

His-257 (proton acceptor) is an active-site residue.

Belongs to the transferase hexapeptide repeat family. LpxD subfamily. As to quaternary structure, homotrimer.

It catalyses the reaction a UDP-3-O-[(3R)-3-hydroxyacyl]-alpha-D-glucosamine + a (3R)-hydroxyacyl-[ACP] = a UDP-2-N,3-O-bis[(3R)-3-hydroxyacyl]-alpha-D-glucosamine + holo-[ACP] + H(+). The protein operates within bacterial outer membrane biogenesis; LPS lipid A biosynthesis. In terms of biological role, catalyzes the N-acylation of UDP-3-O-acylglucosamine using 3-hydroxyacyl-ACP as the acyl donor. Is involved in the biosynthesis of lipid A, a phosphorylated glycolipid that anchors the lipopolysaccharide to the outer membrane of the cell. This Bartonella quintana (strain Toulouse) (Rochalimaea quintana) protein is UDP-3-O-acylglucosamine N-acyltransferase.